We begin with the raw amino-acid sequence, 388 residues long: Succinate--CoA ligase [ADP-forming] subunit beta (388 aa).

The ATP-grasp domain occupies 9–245; that stretch reads KELLAGYGLP…KSQENERELK (237 aa). ATP contacts are provided by residues Lys-46, 53–55, Glu-100, Tyr-103, and Glu-108; that span reads GRG. Mg(2+)-binding residues include Asn-200 and Asp-214. Residues Asn-265 and 322-324 contribute to the substrate site; that span reads GIV.

It belongs to the succinate/malate CoA ligase beta subunit family. In terms of assembly, heterotetramer of two alpha and two beta subunits. The cofactor is Mg(2+).

It catalyses the reaction succinate + ATP + CoA = succinyl-CoA + ADP + phosphate. The enzyme catalyses GTP + succinate + CoA = succinyl-CoA + GDP + phosphate. Its pathway is carbohydrate metabolism; tricarboxylic acid cycle; succinate from succinyl-CoA (ligase route): step 1/1. Its function is as follows. Succinyl-CoA synthetase functions in the citric acid cycle (TCA), coupling the hydrolysis of succinyl-CoA to the synthesis of either ATP or GTP and thus represents the only step of substrate-level phosphorylation in the TCA. The beta subunit provides nucleotide specificity of the enzyme and binds the substrate succinate, while the binding sites for coenzyme A and phosphate are found in the alpha subunit. This chain is Succinate--CoA ligase [ADP-forming] subunit beta, found in Neisseria meningitidis serogroup C (strain 053442).